The following is a 695-amino-acid chain: UvrABC system protein B (695 aa).

Positions 31-414 (EGIESGLSFQ…EIQRSGQIAE (384 aa)) constitute a Helicase ATP-binding domain. 44–51 (GVTGSGKT) contributes to the ATP binding site. Positions 97-120 (YYDYYQPEAYVPSRDLFIEKDSSI) match the Beta-hairpin motif. In terms of domain architecture, Helicase C-terminal spans 435 to 601 (QVDDLMSEVS…GVNKRIKDLI (167 aa)). One can recognise a UVR domain in the interval 632-667 (AKEIQRLEKSMLEAARNMEFEQAAQYRDEIKNLRSK).

Belongs to the UvrB family. Forms a heterotetramer with UvrA during the search for lesions. Interacts with UvrC in an incision complex.

The protein resides in the cytoplasm. In terms of biological role, the UvrABC repair system catalyzes the recognition and processing of DNA lesions. A damage recognition complex composed of 2 UvrA and 2 UvrB subunits scans DNA for abnormalities. Upon binding of the UvrA(2)B(2) complex to a putative damaged site, the DNA wraps around one UvrB monomer. DNA wrap is dependent on ATP binding by UvrB and probably causes local melting of the DNA helix, facilitating insertion of UvrB beta-hairpin between the DNA strands. Then UvrB probes one DNA strand for the presence of a lesion. If a lesion is found the UvrA subunits dissociate and the UvrB-DNA preincision complex is formed. This complex is subsequently bound by UvrC and the second UvrB is released. If no lesion is found, the DNA wraps around the other UvrB subunit that will check the other stand for damage. This chain is UvrABC system protein B, found in Nitrosomonas europaea (strain ATCC 19718 / CIP 103999 / KCTC 2705 / NBRC 14298).